A 306-amino-acid chain; its full sequence is MSVPDTSAVKAFLLDLQQRICEGLEQLDGKGTFEADSWKREEGGGGTSRVLTNGKVFEQAGVNFSHVTGAAMPASATANRSELEGRSFEAMGVSLVIHPKNPFLPTTHANVRFFIAKKEGADPVWWFGGGFDLTPYYPFEEDVIEWHQNAHDLCQPFGESVYPKYKKWCDEYFFLPHRNETRGVGGLFFDDLNQDGFEKSFEFMQAVGNGFLTSYAPIVERRKDTEYGEKEREFQLYRRGRYVEFNLVYDRGTLFGLQTGGRTESILMSMPPLVRWQYAYTPEENSAEALLYTDFLKPKDWLNLDE.

Position 94 (Ser-94) interacts with substrate. A divalent metal cation contacts are provided by His-98 and His-108. Catalysis depends on His-108, which acts as the Proton donor. Substrate is bound at residue 110–112 (NVR). A divalent metal cation is bound by residues His-147 and His-177. The segment at 242–277 (YVEFNLVYDRGTLFGLQTGGRTESILMSMPPLVRWQ) is important for dimerization. Position 260–262 (260–262 (GGR)) interacts with substrate.

The protein belongs to the aerobic coproporphyrinogen-III oxidase family. In terms of assembly, homodimer. A divalent metal cation is required as a cofactor.

It is found in the cytoplasm. The catalysed reaction is coproporphyrinogen III + O2 + 2 H(+) = protoporphyrinogen IX + 2 CO2 + 2 H2O. The protein operates within porphyrin-containing compound metabolism; protoporphyrin-IX biosynthesis; protoporphyrinogen-IX from coproporphyrinogen-III (O2 route): step 1/1. Its function is as follows. Involved in the heme biosynthesis. Catalyzes the aerobic oxidative decarboxylation of propionate groups of rings A and B of coproporphyrinogen-III to yield the vinyl groups in protoporphyrinogen-IX. This chain is Oxygen-dependent coproporphyrinogen-III oxidase, found in Shewanella sediminis (strain HAW-EB3).